Reading from the N-terminus, the 379-residue chain is uncharacterized protein (379 aa).

29 to 36 (GPLNSGKT) serves as a coordination point for ATP.

Belongs to the archaeal ATPase family.

This is an uncharacterized protein from Methanocaldococcus jannaschii (strain ATCC 43067 / DSM 2661 / JAL-1 / JCM 10045 / NBRC 100440) (Methanococcus jannaschii).